A 278-amino-acid chain; its full sequence is Serine protease 57 (278 aa).

The signal sequence occupies residues 1 to 31; sequence MVPGTGGGRDCLTLVVATALTQLLWLPGCCG. Positions 34–263 constitute a Peptidase S1 domain; sequence IVGGHEVKPH…FVSWIWDVVR (230 aa). A disulfide bridge links Cys59 with Cys75. Catalysis depends on charge relay system residues His74 and Asp122. N-linked (GlcNAc...) asparagine glycosylation occurs at Asn129. 3 disulfides stabilise this stretch: Cys157–Cys224, Cys188–Cys202, and Cys214–Cys239. The Charge relay system role is filled by Ser218.

This sequence belongs to the peptidase S1 family. After cleavage of the signal peptide, the N-terminus is probably further processed by CTSC. Processing by CTSC is probably required for accumulation in cytoplasmic granules; in the absence of CTSC the protein does not accumulate. Post-translationally, N-glycosylated.

The protein resides in the cytoplasmic granule lumen. Its subcellular location is the secreted. Serine protease that cleaves preferentially after Arg residues. Can also cleave after citrulline (deimidated arginine) and methylarginine residues. In Rattus norvegicus (Rat), this protein is Serine protease 57 (Prss57).